Consider the following 179-residue polypeptide: Shikimate kinase (179 aa).

Position 12–17 (12–17 (GVGKSK)) interacts with ATP. S16 provides a ligand contact to Mg(2+). Substrate-binding residues include D34, R61, and G83. R131 lines the ATP pocket. R147 provides a ligand contact to substrate.

Belongs to the shikimate kinase family. Monomer. Mg(2+) is required as a cofactor.

It localises to the cytoplasm. The enzyme catalyses shikimate + ATP = 3-phosphoshikimate + ADP + H(+). Its pathway is metabolic intermediate biosynthesis; chorismate biosynthesis; chorismate from D-erythrose 4-phosphate and phosphoenolpyruvate: step 5/7. Its function is as follows. Catalyzes the specific phosphorylation of the 3-hydroxyl group of shikimic acid using ATP as a cosubstrate. The sequence is that of Shikimate kinase from Leptospira borgpetersenii serovar Hardjo-bovis (strain JB197).